The sequence spans 489 residues: Virion host shutoff protein (489 aa).

Disordered regions lie at residues 110–135, 142–161, 285–316, and 333–363; these read EEASDVDASPPPSPITDSRPSSAFSN, SLASGTRGTAGSGAALPSAA, RSQTRRAIRREHTSSRSTETRPPLPPAAGGTE, and YEDDEDLPLDPRDVTGGHPGPRSSSSEILTP. The segment covering 124-134 has biased composition (polar residues); sequence ITDSRPSSAFS.

The protein belongs to the herpesviridae VHS protein family. As to quaternary structure, interacts with human EIF4H, EIF4A1 and EIF4A2; interaction with eIF4AI and EIF4A2 presumably allows Vhs protein to associate with the eIF4F cap-binding complex.

It is found in the virion. Its function is as follows. Minor structural protein that acts as an endoribonuclease during lytic infection. Degrades host mRNAs in the cytoplasm by cutting them at preferred sites, including some in regions of translation initiation. Together with inhibition of host splicing by ICP27, contributes to an overall decrease in host protein synthesis. Also, after the onset of viral transcription, accelerates the turnover of viral mRNA, thereby facilitating the sequential expression of different classes of viral genes. Binds translation initiation factors eIF4H, eIF4AI, and eIF4AII, thereby may interact directly with the translation initiation complex and thus digest specifically mRNAs. Also impedes antigen presentation by major histocompatibility complex class I and class II molecules, inhibits secretion of cytokines that would otherwise recruit lymphocytes and neutrophils cells to the site of infection and blocks the activation of dendritic cells. Impedes the alpha/beta interferon-mediated response to infection by evading the cGAS/ STING-mediated DNA-sensing pathway and degrading CGAS via its RNase activity. The chain is Virion host shutoff protein (UL41) from Human herpesvirus 1 (strain KOS) (HHV-1).